A 946-amino-acid polypeptide reads, in one-letter code: DNA primase (946 aa).

The interval 596–626 is disordered; that stretch reads RDTEEDEDGKEDKNNVPGNGVFQKTTSSVDT. Positions 617–626 are enriched in polar residues; the sequence is FQKTTSSVDT. A CHC2-type zinc finger spans residues 881–920; sequence CLNYTHRNPQETVQVFIDLRTEHSYALWASLWSRCFTKKC.

Belongs to the herpesviridae DNA primase family. Associates with the helicase and the primase-associated factor to form the helicase-primase factor.

The protein localises to the host nucleus. Functionally, essential component of the helicase/primase complex. Unwinds the DNA at the replication forks and generates single-stranded DNA for both leading and lagging strand synthesis. The primase initiates primer synthesis and thereby produces large amount of short RNA primers on the lagging strand that the polymerase elongates using dNTPs. The sequence is that of DNA primase (UL70) from Human cytomegalovirus (strain Merlin) (HHV-5).